The chain runs to 332 residues: Glyceraldehyde-3-phosphate dehydrogenase 1 (332 aa).

NAD(+) is bound by residues R11, I12, D33, and T120. Residues S149 to T151, T180, T209 to G210, and R232 contribute to the D-glyceraldehyde 3-phosphate site. The active-site Nucleophile is C150. N314 and Y318 together coordinate NAD(+).

It belongs to the glyceraldehyde-3-phosphate dehydrogenase family. As to quaternary structure, homotetramer.

The protein localises to the cytoplasm. It carries out the reaction D-glyceraldehyde 3-phosphate + phosphate + NAD(+) = (2R)-3-phospho-glyceroyl phosphate + NADH + H(+). The enzyme catalyses NADH + H2O = (6R)-NADHX. It catalyses the reaction NADH + H2O = (6S)-NADHX. The catalysed reaction is NADPH + H2O = (6R)-NADPHX. It carries out the reaction NADPH + H2O = (6S)-NADPHX. The protein operates within carbohydrate degradation; glycolysis; pyruvate from D-glyceraldehyde 3-phosphate: step 1/5. Functionally, glyceraldehyde-3-phosphate dehydrogenase (GAPDH) involved in glycolysis and gluconeogenesis. Catalyzes the reaction of glyceraldehyde-3-phosphate to 1,3 bis-phosphoglycerate. The contribution of the TDH1, TDH2, and TDH3 to the total glyceraldehyde-3-phosphate dehydrogenase activity is 10-15, 25-30, and 50-60%, respectively. May be involved in a process other than glycolysis because it is synthesized by cells in stationary phase. In terms of biological role, as a side activity, catalyzes the hydration of the nicotinamide ring of NADH or NADPH at the C6 position to give the corresponding hydrates, NADHX and NADPHX, which exist as R and S epimers, that cannot act as electron donors or acceptors and inhibit several dehydrogenases, making them toxic. This chain is Glyceraldehyde-3-phosphate dehydrogenase 1, found in Saccharomyces cerevisiae (strain ATCC 204508 / S288c) (Baker's yeast).